A 500-amino-acid polypeptide reads, in one-letter code: Hexose transporter 1 (500 aa).

Residues 1 to 25 (MKNSNEISSSQSLKNNGSDGFFNTS) are Cytoplasmic-facing. The helical transmembrane segment at 26–46 (LMYVLAACLASFLFGYQVSVL) threads the bilayer. Residues 47–75 (NTIKDFIVIEFGWCAGKEVNCDDSTLKSS) are Extracellular-facing. Residues cysteine 60 and cysteine 67 are joined by a disulfide bond. The helical transmembrane segment at 76–96 (FLLASVFIGAVVGSGFSGFLV) threads the bilayer. The Cytoplasmic portion of the chain corresponds to 97 to 101 (QHGRR). Residues 102 to 122 (FSLLVIYNFFILVSILTSITH) form a helical membrane-spanning segment. The Extracellular segment spans residues 123–131 (HFHTILFSR). The helical transmembrane segment at 132 to 152 (LLSGFGIGLITVSVPMYISEM) threads the bilayer. Residues 153–166 (THKDKKGAYGVLHQ) lie on the Cytoplasmic side of the membrane. Alpha-D-glucose is bound at residue glutamine 166. Residue glutamine 166 coordinates beta-D-glucose. The helical transmembrane segment at 167–187 (LFITFGIFIAVLLGMAMGNVP) threads the bilayer. The Extracellular segment spans residues 188–203 (EEVNNPLGTFQQIWWR). A helical membrane pass occupies residues 204 to 224 (LMFFFPCIISILGIVLLTFFF). The Cytoplasmic portion of the chain corresponds to 225-289 (KEETPYYLFE…RAMKIPSYRY (65 aa)). The chain crosses the membrane as a helical span at residues 290–310 (VILLGCILSGLQQFTGINVLV). Positions 301, 302, and 307 each coordinate alpha-D-glucose. A beta-D-glucose-binding site is contributed by glutamine 301. Residue asparagine 307 participates in beta-D-glucose binding. Residues 311-327 (SNSNALYKGFLTNEWIT) are Extracellular-facing. The chain crosses the membrane as a helical span at residues 328-348 (TLSVIMTVVNFLMTFPAIYIV). Asparagine 337 lines the beta-D-glucose pocket. Over 349–356 (EKLGRKTL) the chain is Cytoplasmic. Residues 357 to 377 (LLCGCAGIVCAFLPTAIANLI) form a helical membrane-spanning segment. The Extracellular portion of the chain corresponds to 378 to 390 (NNTSDVVKKLSIS). Residues 391-411 (ATFVMIVSFAVSYGPVLWIYL) form a helical membrane-spanning segment. Tryptophan 408 contributes to the alpha-D-glucose binding site. Topologically, residues 412–425 (HEMFPSEIKDSAAS) are cytoplasmic. A helical transmembrane segment spans residues 426–446 (LASLVNWMCAIIVVFPSDIII). The Extracellular segment spans residues 447-451 (KQSPT). Residues 452–472 (ILFFIFSGMSIVAFLFIFFFI) form a helical membrane-spanning segment. The Cytoplasmic portion of the chain corresponds to 473–500 (KETKGGEIGTSPYITLEERQKHMGKSVV).

It belongs to the major facilitator superfamily. Sugar transporter (TC 2.A.1.1) family. As to quaternary structure, homodimer.

It is found in the cell membrane. It carries out the reaction D-glucose(out) = D-glucose(in). The enzyme catalyses D-fructose(out) = D-fructose(in). It catalyses the reaction D-galactose(in) = D-galactose(out). The catalysed reaction is D-mannose(out) = D-mannose(in). It carries out the reaction D-glucosamine(out) = D-glucosamine(in). The enzyme catalyses D-xylose(out) = D-xylose(in). Inhibited by cytochalasin B. In terms of biological role, sodium-independent facilitative hexose transporter. Can transport D-glucose and D-fructose. Can transport D-mannose, D-galactose, D-xylose and D-glucosamine. This Plasmodium knowlesi protein is Hexose transporter 1.